Here is a 126-residue protein sequence, read N- to C-terminus: MAGEAVSEHTPDSQEVTVTSVVCCLDSVVEIGHHVVYSVVTPLIVAVLIDTMAGEAVLEHTSDSQEEIVTTVVCSVVPLVCFVVSVVCFVISVVEIGHHVVYSVVAPLTVTVAVETIAEEMDSVHT.

At 1–28 (MAGEAVSEHTPDSQEVTVTSVVCCLDSV) the chain is on the cytoplasmic side. The chain crosses the membrane as a helical span at residues 29-49 (VEIGHHVVYSVVTPLIVAVLI). Residues 50-75 (DTMAGEAVLEHTSDSQEEIVTTVVCS) lie on the Extracellular side of the membrane. The chain crosses the membrane as a helical span at residues 76–96 (VVPLVCFVVSVVCFVISVVEI). Residue G97 is a topological domain, cytoplasmic. The helical transmembrane segment at 98-118 (HHVVYSVVAPLTVTVAVETIA) threads the bilayer. The Extracellular segment spans residues 119 to 126 (EEMDSVHT).

The protein resides in the membrane. This is an uncharacterized protein from Saccharomyces cerevisiae (strain ATCC 204508 / S288c) (Baker's yeast).